We begin with the raw amino-acid sequence, 506 residues long: 7,8-dihydro-6-hydroxymethylpterin dimethyltransferase (506 aa).

The [4Fe-4S] cluster site is built by cysteine 73, cysteine 77, cysteine 80, cysteine 98, cysteine 102, and cysteine 105. The Radical SAM core domain occupies 82 to 300 (NHKSTTILAN…FIKLVEEQTD (219 aa)).

This sequence belongs to the radical SAM superfamily. The cofactor is [4Fe-4S] cluster. It depends on S-adenosyl-L-methionine as a cofactor.

It functions in the pathway cofactor biosynthesis; 5,6,7,8-tetrahydromethanopterin biosynthesis. Its function is as follows. Is responsible for the addition of methyl groups at C-7 and C-9 of the pterin ring during methanopterin (MPT) biosynthesis. Catalyzes methylation of 7,8-dihydro-6-hydroxymethylpterin, likely using methylenetetrahydromethanopterin as a methyl group donor, via a radical-based mechanism. The protein is 7,8-dihydro-6-hydroxymethylpterin dimethyltransferase of Methanocaldococcus jannaschii (strain ATCC 43067 / DSM 2661 / JAL-1 / JCM 10045 / NBRC 100440) (Methanococcus jannaschii).